The sequence spans 541 residues: 5' exonuclease Apollo (541 aa).

Lysine 334 participates in a covalent cross-link: Glycyl lysine isopeptide (Lys-Gly) (interchain with G-Cter in SUMO2). The disordered stretch occupies residues proline 455 to glycine 475. Positions glutamate 492 to phenylalanine 507 match the TBM motif.

Belongs to the DNA repair metallo-beta-lactamase (DRMBL) family. As to quaternary structure, interacts with MUS81, MRE11 and FANCD2. Interacts with HSPA2, HSPA8 and HSPA14. Interacts with SPAG5. Interacts with TERF2; the interaction is direct. Ubiquitinated, leading to its degradation. Interaction with TERF2 protects it from ubiquitination.

The protein localises to the chromosome. Its subcellular location is the telomere. It localises to the nucleus. It is found in the cytoplasm. The protein resides in the cytoskeleton. The protein localises to the microtubule organizing center. Its subcellular location is the centrosome. It catalyses the reaction a beta-lactam + H2O = a substituted beta-amino acid. In terms of biological role, 5'-3' exonuclease that plays a central role in telomere maintenance and protection during S-phase. Participates in the protection of telomeres against non-homologous end-joining (NHEJ)-mediated repair, thereby ensuring that telomeres do not fuse. Plays a key role in telomeric loop (T loop) formation by being recruited by TERF2 at the leading end telomeres and by processing leading-end telomeres immediately after their replication via its exonuclease activity: generates 3' single-stranded overhang at the leading end telomeres avoiding blunt leading-end telomeres that are vulnerable to end-joining reactions and expose the telomere end in a manner that activates the DNA repair pathways. Together with TERF2, required to protect telomeres from replicative damage during replication by controlling the amount of DNA topoisomerase (TOP1, TOP2A and TOP2B) needed for telomere replication during fork passage and prevent aberrant telomere topology. Also involved in response to DNA damage: plays a role in response to DNA interstrand cross-links (ICLs) by facilitating double-strand break formation. In case of spindle stress, involved in prophase checkpoint. Possesses beta-lactamase activity, catalyzing the hydrolysis of penicillin G and nitrocefin. Exhibits no activity towards other beta-lactam antibiotic classes including cephalosporins (cefotaxime) and carbapenems (imipenem). The chain is 5' exonuclease Apollo (Dclre1b) from Mus musculus (Mouse).